The primary structure comprises 140 residues: Large ribosomal subunit protein bL17 (140 aa).

This sequence belongs to the bacterial ribosomal protein bL17 family. In terms of assembly, part of the 50S ribosomal subunit. Contacts protein L32.

The chain is Large ribosomal subunit protein bL17 from Rhizobium rhizogenes (strain K84 / ATCC BAA-868) (Agrobacterium radiobacter).